Reading from the N-terminus, the 595-residue chain is L-allo-isoleucine:holo-[CmaA peptidyl-carrier protein] ligase (595 aa).

The 76-residue stretch at 507-582 folds into the Carrier domain; that stretch reads VVSPQAGSAV…EWVQYYATHA (76 aa). O-(pantetheine 4'-phosphoryl)serine is present on S542.

Belongs to the ATP-dependent AMP-binding enzyme family. As to quaternary structure, homodimer. Pantetheine 4'-phosphate serves as cofactor.

The enzyme catalyses L-alloisoleucine + holo-[CmaA peptidyl-carrier protein] + ATP = L-alloisoleucyl-[CmaA peptidyl-carrier protein] + AMP + diphosphate. Its function is as follows. Involved in the biosynthesis of the phytotoxin coronatine (COR) which mimics the plant hormone jasmonic acid isoleucine and promotes opening of stomata for bacterial entry, bacterial growth in the apoplast, systemic susceptibility, and disease symptoms. CmaA catalyzes the adenylation of L-allo-isoleucine (via the A domain) and the attachment of L-allo-isoleucine to the 4'-phosphopantetheine arm located within the T domain of CmaA. It can also use L-isoleucine, L-leucine and L-valine as substrates. The sequence is that of L-allo-isoleucine:holo-[CmaA peptidyl-carrier protein] ligase from Pseudomonas savastanoi pv. glycinea (Pseudomonas syringae pv. glycinea).